The sequence spans 343 residues: MENLNKDFTLVGSKGSDSTEKIAKPALSFFQDAWRRFKKNKIALVAMWIIAITLVFSVISAFVVPQSKANYFNPNKSQVYGNLPPKLSGDLPFWNGDFKAPGSAEKTDVYKAQGVPEKDKYVFGTDKYGRSLAKRTVVGLRISLIIALAAALIDLVIGVTYGIISGWMGGKVDMVMQRIIEIIQSVPNLVVVTMLALLLGQGISSIIIAIGLFAWTGMARQVRNMVLSYKERDFVLASKTLGQSTWKIAVKHLLPNVSGVIVVQIMFDIPSMIMYEAVLSAINLGVKPPTSSLGTLINDGIASLQFYPFQLIIPAIVLSVLSLTFIFFGDGLRDAFDPRASED.

Helical transmembrane passes span leucine 44–valine 64, leucine 144–isoleucine 164, leucine 195–tryptophan 215, glycine 259–leucine 279, and phenylalanine 309–glycine 329. An ABC transmembrane type-1 domain is found at leucine 140–glycine 329.

Belongs to the binding-protein-dependent transport system permease family. OppBC subfamily. As to quaternary structure, the complex is composed of two ATP-binding proteins (DppD and DppF), two transmembrane proteins (DppB and DppC) and a solute-binding protein (DppA).

The protein localises to the cell membrane. Functionally, part of the ABC transporter DppABCDF involved in dipeptide transport. Responsible for the translocation of the substrate across the membrane. The chain is Dipeptide transport system permease protein DppC from Lactococcus lactis subsp. cremoris (strain MG1363).